A 302-amino-acid chain; its full sequence is RNA polymerase II holoenzyme cyclin-like subunit (302 aa).

The Cyclin N-terminal domain occupies 53–142 (QQLIKLGKRM…VGECEFSLIS (90 aa)).

The protein belongs to the cyclin family. Cyclin C subfamily. In terms of assembly, component of the srb8-11 complex, a regulatory module of the Mediator complex.

The protein resides in the nucleus. Component of the srb8-11 complex. The srb8-11 complex is a regulatory module of the Mediator complex which is itself involved in regulation of basal and activated RNA polymerase II-dependent transcription. The srb8-11 complex may be involved in the transcriptional repression of a subset of genes regulated by Mediator. It may inhibit the association of the Mediator complex with RNA polymerase II to form the holoenzyme complex. The srb8-11 complex phosphorylates the C-terminal domain (CTD) of the largest subunit of RNA polymerase II. The protein is RNA polymerase II holoenzyme cyclin-like subunit (ssn8) of Emericella nidulans (strain FGSC A4 / ATCC 38163 / CBS 112.46 / NRRL 194 / M139) (Aspergillus nidulans).